The chain runs to 1108 residues: Isoleucine--tRNA ligase (1108 aa).

The short motif at 53–63 (PFANGLPHYGH) is the 'HIGH' region element. Positions 654–658 (KLSKR) match the 'KMSKS' region motif. An ATP-binding site is contributed by Lys-657.

Belongs to the class-I aminoacyl-tRNA synthetase family. IleS type 2 subfamily. In terms of assembly, monomer. Requires Zn(2+) as cofactor.

Its subcellular location is the cytoplasm. The enzyme catalyses tRNA(Ile) + L-isoleucine + ATP = L-isoleucyl-tRNA(Ile) + AMP + diphosphate. Catalyzes the attachment of isoleucine to tRNA(Ile). As IleRS can inadvertently accommodate and process structurally similar amino acids such as valine, to avoid such errors it has two additional distinct tRNA(Ile)-dependent editing activities. One activity is designated as 'pretransfer' editing and involves the hydrolysis of activated Val-AMP. The other activity is designated 'posttransfer' editing and involves deacylation of mischarged Val-tRNA(Ile). The protein is Isoleucine--tRNA ligase of Rickettsia bellii (strain OSU 85-389).